We begin with the raw amino-acid sequence, 888 residues long: Autophagy-related protein 9 (888 aa).

A disordered region spans residues 1–170; sequence MASNIFSRIK…PYTTPMGPQP (170 aa). The Cytoplasmic portion of the chain corresponds to 1 to 255; sequence MASNIFSRIK…CTRKMSGLWN (255 aa). The segment covering 13–24 has biased composition (polar residues); that stretch reads SGGSQSFYQQLR. The segment covering 28 to 38 has biased composition (acidic residues); the sequence is DPEYDPGLDEE. The span at 123 to 143 shows a compositional bias: polar residues; sequence RATNPGSSRTPASVGPSSART. A helical transmembrane segment spans residues 256-276; the sequence is FAIWLYTFFFIWKCVQYFVEI. The Lumenal portion of the chain corresponds to 277 to 422; that stretch reads RRLTYIRDFY…RLLSQKLRQR (146 aa). Residues 423–443 form a helical membrane-spanning segment; sequence FLFAGFLNLLFAPVVLAYVVI. Topologically, residues 444–511 are cytoplasmic; it reads VYFFTYYYEY…PKRITEAVAR (68 aa). An intramembrane segment occupies 512-532; sequence TIAFMSGAITAILAIGSVLDS. Residues 533–544 lie on the Cytoplasmic side of the membrane; the sequence is ELFLNFEITKDR. A helical membrane pass occupies residues 545–565; that stretch reads PVIFYLGVFAAIWATTRGMVS. The Lumenal segment spans residues 566 to 611; sequence EETLVFNPEYALRNVIEYTRYVPDHWKNKLHSSEVKQEFSELYKMK. The helical transmembrane segment at 612-632 threads the bilayer; the sequence is VVIFLEEMMGIVTTPMLLLFS. At 633–642 the chain is on the cytoplasmic side; sequence LPRCSDQIVD. An intramembrane segment occupies 643 to 663; it reads FFREFTIHVDGLGYVCSFAVF. The Cytoplasmic segment spans residues 664–888; that stretch reads DFQKGPGNTG…QRPRRGGGMV (225 aa). 2 disordered regions span residues 748–770 and 834–866; these read GRTG…PRIG and EPGG…DPEA.

The protein belongs to the ATG9 family. Homotrimer; forms a homotrimer with a central pore that forms a path between the two membrane leaflets. Post-translationally, phosphorylated by ATG1. ATG1 phosphorylation is required for ATG18 interaction and preautophagosome elongation.

The protein localises to the preautophagosomal structure membrane. Its subcellular location is the cytoplasmic vesicle membrane. It localises to the golgi apparatus membrane. The protein resides in the endoplasmic reticulum membrane. The enzyme catalyses a 1,2-diacyl-sn-glycero-3-phosphocholine(in) = a 1,2-diacyl-sn-glycero-3-phosphocholine(out). It catalyses the reaction a 1,2-diacyl-sn-glycero-3-phospho-L-serine(in) = a 1,2-diacyl-sn-glycero-3-phospho-L-serine(out). It carries out the reaction a 1,2-diacyl-sn-glycero-3-phosphoethanolamine(in) = a 1,2-diacyl-sn-glycero-3-phosphoethanolamine(out). The catalysed reaction is a 1,2-diacyl-sn-glycero-3-phospho-(1D-myo-inositol-3-phosphate)(in) = a 1,2-diacyl-sn-glycero-3-phospho-(1D-myo-inositol-3-phosphate)(out). In terms of biological role, phospholipid scramblase involved in autophagy and cytoplasm to vacuole transport (Cvt) vesicle formation. Cycles between the preautophagosomal structure/phagophore assembly site (PAS) and the cytoplasmic vesicle pool and supplies membrane for the growing autophagosome. Lipid scramblase activity plays a key role in preautophagosomal structure/phagophore assembly by distributing the phospholipids that arrive through ATG2 from the cytoplasmic to the luminal leaflet of the bilayer, thereby driving autophagosomal membrane expansion. Required for mitophagy. Also involved in endoplasmic reticulum-specific autophagic process and is essential for the survival of cells subjected to severe ER stress. Different machineries are required for anterograde trafficking to the PAS during either the Cvt pathway or bulk autophagy and for retrograde trafficking. Autophagy is required for proper vegetative growth, asexual/sexual reproduction, and full virulence. Autophagy is particularly involved in the biosynthesis of deoxynivalenol (DON), an important virulence determinant. Required for aerial hyphae development and lipid droplet degradation in response to starvation. The polypeptide is Autophagy-related protein 9 (Gibberella zeae (strain ATCC MYA-4620 / CBS 123657 / FGSC 9075 / NRRL 31084 / PH-1) (Wheat head blight fungus)).